The primary structure comprises 106 residues: ATP-dependent Clp protease adapter protein ClpS (106 aa).

The protein belongs to the ClpS family. In terms of assembly, binds to the N-terminal domain of the chaperone ClpA.

Its function is as follows. Involved in the modulation of the specificity of the ClpAP-mediated ATP-dependent protein degradation. In Vibrio atlanticus (strain LGP32) (Vibrio splendidus (strain Mel32)), this protein is ATP-dependent Clp protease adapter protein ClpS.